Consider the following 186-residue polypeptide: MDFIISFIKNLFGFLTIKKVMILGVENVGKTTLLYNIYKFYSENITTTTLSSLPIPIPTNGFNVESIVIEQVKFDIWDIGGKETNRICYRHYLTSEIDSIIFVFDSSDINSLEESKKEYQYLKNQISLKNVPFLLVANKQDLKQQTIEIDEILKTYFDKSSINETILMSQNNNDDLIKCINWIFSN.

GTP-binding positions include glycine 24–threonine 31, aspartate 78–lysine 82, and asparagine 138–aspartate 141.

This sequence belongs to the small GTPase superfamily. Arf family.

Functionally, binds and exchanges GTP and GDP. The polypeptide is ADP-ribosylation factor-like protein DDB_G0292332 (Dictyostelium discoideum (Social amoeba)).